The following is a 98-amino-acid chain: NADH-ubiquinone oxidoreductase chain 4L (98 aa).

3 consecutive transmembrane segments (helical) span residues 1–21 (MTTI…GVLI), 26–46 (LLST…LMAL), and 59–79 (APLI…ALLV).

The protein belongs to the complex I subunit 4L family. Core subunit of respiratory chain NADH dehydrogenase (Complex I) which is composed of 45 different subunits.

The protein localises to the mitochondrion inner membrane. The catalysed reaction is a ubiquinone + NADH + 5 H(+)(in) = a ubiquinol + NAD(+) + 4 H(+)(out). Core subunit of the mitochondrial membrane respiratory chain NADH dehydrogenase (Complex I) which catalyzes electron transfer from NADH through the respiratory chain, using ubiquinone as an electron acceptor. Part of the enzyme membrane arm which is embedded in the lipid bilayer and involved in proton translocation. In Rhyncholestes raphanurus (Chilean shrew opossum), this protein is NADH-ubiquinone oxidoreductase chain 4L (MT-ND4L).